Reading from the N-terminus, the 287-residue chain is Intermediate filament family orphan 2 (287 aa).

The region spanning 1–254 (MNLQTMVDTL…RLIKGSADRN (254 aa)) is the IF rod domain. The segment at 248–287 (KGSADRNSPSPSSVASSDSGSTDEIQDDLEREADVEPMVS) is disordered. A compositionally biased stretch (low complexity) spans 255-267 (SPSPSSVASSDSG). Residues 271-287 (EIQDDLEREADVEPMVS) are compositionally biased toward acidic residues.

It belongs to the intermediate filament family.

The sequence is that of Intermediate filament family orphan 2 (Iffo2) from Rattus norvegicus (Rat).